The chain runs to 130 residues: Small ribosomal subunit protein uS8 (130 aa).

Belongs to the universal ribosomal protein uS8 family.

The protein resides in the cytoplasm. The sequence is that of Small ribosomal subunit protein uS8 (RPS15A) from Brassica napus (Rape).